Here is a 663-residue protein sequence, read N- to C-terminus: UvrABC system protein B (663 aa).

The Helicase ATP-binding domain occupies 26–183; that stretch reads DGLESGLAKQ…KRLAEMQYTR (158 aa). 39–46 lines the ATP pocket; that stretch reads GVTGSGKT. The Beta-hairpin signature appears at 92–115; it reads YYDYYQPEAYVPASDTFIEKDASI. The Helicase C-terminal domain maps to 430–596; that stretch reads QVDDLMSEIR…GINKSVEDIL (167 aa). Residues 624 to 659 form the UVR domain; sequence AKQINALEKQMYAHAQNMEFELAAKIRDEYLLLKEQ.

The protein belongs to the UvrB family. Forms a heterotetramer with UvrA during the search for lesions. Interacts with UvrC in an incision complex.

Its subcellular location is the cytoplasm. In terms of biological role, the UvrABC repair system catalyzes the recognition and processing of DNA lesions. A damage recognition complex composed of 2 UvrA and 2 UvrB subunits scans DNA for abnormalities. Upon binding of the UvrA(2)B(2) complex to a putative damaged site, the DNA wraps around one UvrB monomer. DNA wrap is dependent on ATP binding by UvrB and probably causes local melting of the DNA helix, facilitating insertion of UvrB beta-hairpin between the DNA strands. Then UvrB probes one DNA strand for the presence of a lesion. If a lesion is found the UvrA subunits dissociate and the UvrB-DNA preincision complex is formed. This complex is subsequently bound by UvrC and the second UvrB is released. If no lesion is found, the DNA wraps around the other UvrB subunit that will check the other stand for damage. The protein is UvrABC system protein B of Legionella pneumophila (strain Corby).